A 296-amino-acid polypeptide reads, in one-letter code: Haloalkane dehalogenase (296 aa).

The 125-residue stretch at 31 to 155 (PILFQHGNPT…QDRDLFQAFR (125 aa)) folds into the AB hydrolase-1 domain. Residue asparagine 38 coordinates chloride. Residue aspartate 108 is the Nucleophile of the active site. Tryptophan 109 serves as a coordination point for chloride. Residue glutamate 132 is the Proton donor of the active site. The Proton acceptor role is filled by histidine 272.

The protein belongs to the haloalkane dehalogenase family. Type 2 subfamily. As to quaternary structure, monomer.

The protein resides in the periplasm. It carries out the reaction 1-haloalkane + H2O = a halide anion + a primary alcohol + H(+). The catalysed reaction is (3R,6R)-1,3,4,6-tetrachlorocyclohexa-1,4-diene + 2 H2O = 2,5-dichlorocyclohexa-2,5-dien-1,4-diol + 2 chloride + 2 H(+). The protein operates within xenobiotic degradation; gamma-hexachlorocyclohexane degradation. Competitively inhibited by the key pollutants 1,2-dichloroethane (1,2-DCE) and 1,2-dichloropropane (1,2-DCP). Its function is as follows. Catalyzes hydrolytic cleavage of carbon-halogen bonds in halogenated aliphatic compounds, leading to the formation of the corresponding primary alcohols, halide ions and protons. Has a broad substrate specificity since not only monochloroalkanes (C3 to C10) but also dichloroalkanes (&gt; C3), bromoalkanes, and chlorinated aliphatic alcohols are good substrates. Shows almost no activity with 1,2-dichloroethane, but very high activity with the brominated analog. Is involved in the degradation of the important environmental pollutant gamma-hexachlorocyclohexane (gamma-HCH or lindane) as it also catalyzes conversion of 1,3,4,6-tetrachloro-1,4-cyclohexadiene (1,4-TCDN) to 2,5-dichloro-2,5-cyclohexadiene-1,4-diol (2,5-DDOL) via the intermediate 2,4,5-trichloro-2,5-cyclohexadiene-1-ol (2,4,5-DNOL). This degradation pathway allows S.japonicum UT26 to grow on gamma-HCH as the sole source of carbon and energy. The chain is Haloalkane dehalogenase from Sphingobium indicum (strain DSM 16413 / CCM 7287 / MTCC 6362 / UT26 / NBRC 101211 / UT26S) (Sphingobium japonicum).